We begin with the raw amino-acid sequence, 1058 residues long: Carbamoyl phosphate synthase large chain (1058 aa).

Residues 1–401 are carboxyphosphate synthetic domain; it reads MAKRTDIKKI…CLLKACRSLE (401 aa). 12 residues coordinate ATP: R129, R169, G175, G176, R208, I210, E215, G241, I242, H243, Q284, and E298. Residues 133 to 327 form the ATP-grasp 1 domain; the sequence is KQLMKELGEP…IAKIAAKIAV (195 aa). Positions 284, 298, and 300 each coordinate Mg(2+). Q284, E298, and N300 together coordinate Mn(2+). Residues 402 to 546 form an oligomerization domain region; the sequence is IGVDHNELKG…YSTYEWENES (145 aa). Positions 547-929 are carbamoyl phosphate synthetic domain; the sequence is IKSEKESVIV…ALYKAFEASY (383 aa). In terms of domain architecture, ATP-grasp 2 spans 671–861; sequence EKALKDLGIP…MAQVATKLIL (191 aa). The ATP site is built by R707, S746, I748, E752, G777, V778, H779, S780, Q820, and E832. Residues Q820, E832, and N834 each contribute to the Mg(2+) site. Residues Q820, E832, and N834 each coordinate Mn(2+). In terms of domain architecture, MGS-like spans 930-1058; it reads LHMPEYGTIV…ESRTFSIEAI (129 aa). Residues 930–1058 are allosteric domain; sequence LHMPEYGTIV…ESRTFSIEAI (129 aa).

It belongs to the CarB family. As to quaternary structure, composed of two chains; the small (or glutamine) chain promotes the hydrolysis of glutamine to ammonia, which is used by the large (or ammonia) chain to synthesize carbamoyl phosphate. Tetramer of heterodimers (alpha,beta)4. Requires Mg(2+) as cofactor. The cofactor is Mn(2+).

It carries out the reaction hydrogencarbonate + L-glutamine + 2 ATP + H2O = carbamoyl phosphate + L-glutamate + 2 ADP + phosphate + 2 H(+). It catalyses the reaction hydrogencarbonate + NH4(+) + 2 ATP = carbamoyl phosphate + 2 ADP + phosphate + 2 H(+). It functions in the pathway amino-acid biosynthesis; L-arginine biosynthesis; carbamoyl phosphate from bicarbonate: step 1/1. It participates in pyrimidine metabolism; UMP biosynthesis via de novo pathway; (S)-dihydroorotate from bicarbonate: step 1/3. Large subunit of the glutamine-dependent carbamoyl phosphate synthetase (CPSase). CPSase catalyzes the formation of carbamoyl phosphate from the ammonia moiety of glutamine, carbonate, and phosphate donated by ATP, constituting the first step of 2 biosynthetic pathways, one leading to arginine and/or urea and the other to pyrimidine nucleotides. The large subunit (synthetase) binds the substrates ammonia (free or transferred from glutamine from the small subunit), hydrogencarbonate and ATP and carries out an ATP-coupled ligase reaction, activating hydrogencarbonate by forming carboxy phosphate which reacts with ammonia to form carbamoyl phosphate. This chain is Carbamoyl phosphate synthase large chain, found in Streptococcus equi subsp. zooepidemicus (strain H70).